We begin with the raw amino-acid sequence, 385 residues long: Deoxyguanosinetriphosphate triphosphohydrolase-like protein (385 aa).

Residues 75 to 197 (RLTHTLEVGQ…VDAADALAYT (123 aa)) form the HD domain.

It belongs to the dGTPase family. Type 2 subfamily.

This is Deoxyguanosinetriphosphate triphosphohydrolase-like protein from Deinococcus geothermalis (strain DSM 11300 / CIP 105573 / AG-3a).